Reading from the N-terminus, the 471-residue chain is Lincomycin resistance protein LmrB (471 aa).

Transmembrane regions (helical) follow at residues Pro15 to Leu34, Leu55 to Phe77, Leu82 to Ala104, Val111 to Ile131, Met141 to Leu163, Trp170 to Met187, Asp202 to Gly224, Ala231 to Thr253, Met268 to Leu290, Ser297 to Met319, Ala329 to Thr351, Ser358 to Ala380, and Gly445 to Ile467.

It belongs to the major facilitator superfamily. EmrB family.

Its subcellular location is the cell membrane. In terms of biological role, proton-dependent transporter. May mediate the efflux of lincomycin. This chain is Lincomycin resistance protein LmrB (lmrB), found in Listeria innocua serovar 6a (strain ATCC BAA-680 / CLIP 11262).